We begin with the raw amino-acid sequence, 499 residues long: Glycerol kinase (499 aa).

Threonine 13 serves as a coordination point for ADP. Residues threonine 13, threonine 14, and serine 15 each contribute to the ATP site. Threonine 13 serves as a coordination point for sn-glycerol 3-phosphate. Arginine 17 is a binding site for ADP. The sn-glycerol 3-phosphate site is built by arginine 83, glutamate 84, tyrosine 135, and aspartate 245. Glycerol contacts are provided by arginine 83, glutamate 84, tyrosine 135, aspartate 245, and glutamine 246. Residues threonine 267 and glycine 310 each coordinate ADP. The ATP site is built by threonine 267, glycine 310, glutamine 314, and alanine 411. Positions 411 and 415 each coordinate ADP.

Belongs to the FGGY kinase family.

The catalysed reaction is glycerol + ATP = sn-glycerol 3-phosphate + ADP + H(+). Its pathway is polyol metabolism; glycerol degradation via glycerol kinase pathway; sn-glycerol 3-phosphate from glycerol: step 1/1. Inhibited by fructose 1,6-bisphosphate (FBP). Its function is as follows. Key enzyme in the regulation of glycerol uptake and metabolism. Catalyzes the phosphorylation of glycerol to yield sn-glycerol 3-phosphate. The polypeptide is Glycerol kinase (Xylella fastidiosa (strain M23)).